We begin with the raw amino-acid sequence, 498 residues long: Hexokinase-1 (498 aa).

The helical transmembrane segment at 4 to 24 threads the bilayer; that stretch reads VTVGAAVVGAAAVCAVAALIV. Residues 35 to 488 form the Hexokinase domain; it reads GRAMAILREF…SGIGAALLRA (454 aa). Residues 89–228 form a hexokinase small subdomain region; the sequence is QLVMKLGVFY…VLDMRVSALV (140 aa). The ADP site is built by G104, T105, and N106. Positions 194, 195, 229, and 230 each coordinate D-glucose. The interval 229–477 is hexokinase large subdomain; that stretch reads NDTVGTLAGG…TSIVFVHSND (249 aa). T253 contacts ADP. Positions 256, 284, and 315 each coordinate D-glucose. ADP is bound at residue G442.

It belongs to the hexokinase family. In terms of tissue distribution, expressed in young and mature leaves, stems, roots, stolons, and developing and mature tubers.

The protein resides in the plastid. Its subcellular location is the chloroplast outer membrane. The catalysed reaction is a D-hexose + ATP = a D-hexose 6-phosphate + ADP + H(+). It catalyses the reaction D-fructose + ATP = D-fructose 6-phosphate + ADP + H(+). It carries out the reaction D-glucose + ATP = D-glucose 6-phosphate + ADP + H(+). The protein operates within carbohydrate metabolism; hexose metabolism. It functions in the pathway carbohydrate degradation; glycolysis; D-glyceraldehyde 3-phosphate and glycerone phosphate from D-glucose: step 1/4. Its function is as follows. Fructose and glucose phosphorylating enzyme. May be involved in the phosphorylation of glucose during the export from plastids to cytosol. Seems neither to be involved in cell sugar sensing nor in carbohydrate metabolism in tuber. This chain is Hexokinase-1 (HXK1), found in Solanum tuberosum (Potato).